A 409-amino-acid polypeptide reads, in one-letter code: Serine/threonine transporter SstT (409 aa).

9 consecutive transmembrane segments (helical) span residues 14-34 (GNLI…GFIA), 57-77 (GALK…SIII), 89-109 (IIIL…VVSF), 149-169 (AISS…GIAL), 190-210 (IVKF…ATSV), 224-244 (LLLV…AAIV), 296-316 (ISIP…IAVL), 338-358 (IIAA…LMLI), and 365-385 (FGIS…IGVV).

This sequence belongs to the dicarboxylate/amino acid:cation symporter (DAACS) (TC 2.A.23) family.

The protein localises to the cell inner membrane. It carries out the reaction L-serine(in) + Na(+)(in) = L-serine(out) + Na(+)(out). It catalyses the reaction L-threonine(in) + Na(+)(in) = L-threonine(out) + Na(+)(out). In terms of biological role, involved in the import of serine and threonine into the cell, with the concomitant import of sodium (symport system). In Campylobacter fetus subsp. fetus (strain 82-40), this protein is Serine/threonine transporter SstT.